The sequence spans 932 residues: UPF0182 protein Amet_0022 (932 aa).

Transmembrane regions (helical) follow at residues 14–34, 60–80, 104–124, 166–186, 208–228, 256–276, and 286–306; these read VIIGLGIFIFIFLFGFLSEIL, LQIGIPLFIVGTILYYLYLIG, ILILPAFVFGLMTSTSVAGSL, TSILFLMVIITVIFYVIMFLI, LLQIALKQFAALGVIFFLVLA, VTLWVYRAQILASLLSATGVV, and LLLIAPISIIAVGILGNVISL.

Belongs to the UPF0182 family.

It localises to the cell membrane. This Alkaliphilus metalliredigens (strain QYMF) protein is UPF0182 protein Amet_0022.